The sequence spans 414 residues: Alanine--glyoxylate aminotransferase (414 aa).

The transit peptide at Met-1–Met-23 directs the protein to the mitochondrion. Lys-231 bears the N6-(pyridoxal phosphate)lysine mark. N6-acetyllysine; alternate is present on Lys-247. Lys-247 is subject to N6-succinyllysine; alternate. Residues Lys-256 and Lys-334 each carry the N6-acetyllysine modification. Arg-382 contributes to the substrate binding site. Residues Asn-412 to Leu-414 carry the Microbody targeting signal motif.

The protein belongs to the class-V pyridoxal-phosphate-dependent aminotransferase family. Homodimer. Pyridoxal 5'-phosphate serves as cofactor.

It is found in the peroxisome. The protein localises to the mitochondrion matrix. It carries out the reaction L-serine + pyruvate = 3-hydroxypyruvate + L-alanine. The enzyme catalyses glyoxylate + L-alanine = glycine + pyruvate. Functionally, catalyzes the transamination of glyoxylate to glycine and contributes to the glyoxylate detoxification. Its function is as follows. Catalyzes the transamination between L-serine and pyruvate and weakly contributes to gluconeogenesis from the L-serine metabolism. The sequence is that of Alanine--glyoxylate aminotransferase from Rattus norvegicus (Rat).